Here is a 226-residue protein sequence, read N- to C-terminus: Peroxiredoxin-like 2C (226 aa).

The protein belongs to the peroxiredoxin-like PRXL2 family. PRXL2C subfamily. In terms of tissue distribution, expressed in gastric tissues.

May positively regulate ERK1/2 signaling and AKT1 activation leading to HIF1A up-regulation with an increased expression of glycolysis genes and enhanced glycolysis. The protein is Peroxiredoxin-like 2C of Homo sapiens (Human).